The primary structure comprises 95 residues: Putative membrane protein insertion efficiency factor (95 aa).

This sequence belongs to the UPF0161 family.

The protein localises to the cell membrane. Functionally, could be involved in insertion of integral membrane proteins into the membrane. This Lactobacillus delbrueckii subsp. bulgaricus (strain ATCC 11842 / DSM 20081 / BCRC 10696 / JCM 1002 / NBRC 13953 / NCIMB 11778 / NCTC 12712 / WDCM 00102 / Lb 14) protein is Putative membrane protein insertion efficiency factor.